A 201-amino-acid polypeptide reads, in one-letter code: Small ribosomal subunit protein uS4 (201 aa).

In terms of domain architecture, S4 RNA-binding spans 92–155 (ARLDNVVFRL…KSLEVIANSL (64 aa)).

It belongs to the universal ribosomal protein uS4 family. As to quaternary structure, part of the 30S ribosomal subunit. Contacts protein S5. The interaction surface between S4 and S5 is involved in control of translational fidelity.

One of the primary rRNA binding proteins, it binds directly to 16S rRNA where it nucleates assembly of the body of the 30S subunit. Functionally, with S5 and S12 plays an important role in translational accuracy. In Phocaeicola vulgatus (strain ATCC 8482 / DSM 1447 / JCM 5826 / CCUG 4940 / NBRC 14291 / NCTC 11154) (Bacteroides vulgatus), this protein is Small ribosomal subunit protein uS4.